The primary structure comprises 96 residues: UPF0235 protein Ent638_3359 (96 aa).

Belongs to the UPF0235 family.

The polypeptide is UPF0235 protein Ent638_3359 (Enterobacter sp. (strain 638)).